Consider the following 66-residue polypeptide: Large ribosomal subunit protein uL29 (66 aa).

This sequence belongs to the universal ribosomal protein uL29 family.

This Geobacillus thermodenitrificans (strain NG80-2) protein is Large ribosomal subunit protein uL29.